The following is a 588-amino-acid chain: MTATPAQRRPALPATRPYPARHGPKGSYLRKMVTTTDPKDLGVLYLVSATGFFLIGGLLALLMRGELARPGLQFLSAEQYNQLFTMHGTIMLLFYATPVVFGFANAVLPLQIGAPDVAFPRLNAFSYWLYLFGATMATAGFLTPGGAADFGWTAYTPLSLSEHSPGVGADLWILGLAVSGLGTILGAVNMITTVVCLRAPGMTMFRMPIFTWNILITSILVLLAFPILTAALMALAYDRHLGGHIYDPANGGAILYQHLFWFFGHPEVYIIALPFFGIISEVIPVFSRKPIFGYTALVYATLAIAALSMAVWAHHMYATGAVLLPFFSMMTFLIAVPTGVKFFNWIGTMWKGQITFETPMLFAIGFIVTFLLGGLSGVILASPPLDWHVTDSYFVVAHFHYVLFGTIVFATFAGIYFWFPKLTGRFMDERLGRLHFWTTFLGFHLTFLVQHWLGNEGMPRRYADYLPSDGFTGLNTVSTIGSFLLGISMVTFVWNGFKSFRYGEVVTVDDPWGAGNSLEWATTCPPPRHNFYELPRIRSERPAFELHYPHMAERMRAEAHAGRRAGHGAGAELSVPSTVATKDDDHTS.

The interval 1 to 26 is disordered; sequence MTATPAQRRPALPATRPYPARHGPKG. Residues 43-63 form a helical membrane-spanning segment; the sequence is VLYLVSATGFFLIGGLLALLM. H87 is a Fe(II)-heme a binding site. 6 helical membrane passes run 90–110, 128–148, 171–191, 214–234, 259–279, and 291–311; these read IMLL…VLPL, WLYL…GGAA, LWIL…VNMI, ILIT…ALMA, LFWF…FGII, and IFGY…SMAV. 2 residues coordinate Cu cation: H265 and Y269. A cross-link (1'-histidyl-3'-tyrosine (His-Tyr)) is located at residues 265-269; it reads HPEVY. 2 residues coordinate Cu cation: H314 and H315. Transmembrane regions (helical) follow at residues 320 to 340 and 360 to 380; these read GAVL…PTGV and MLFA…GVIL. H398 contributes to the heme a3 binding site. A run of 3 helical transmembrane segments spans residues 399–419, 434–454, and 477–497; these read FHYV…YFWF, LHFW…HWLG, and VSTI…WNGF. H400 is a Fe(II)-heme a binding site. The segment at 557–588 is disordered; it reads AEAHAGRRAGHGAGAELSVPSTVATKDDDHTS.

This sequence belongs to the heme-copper respiratory oxidase family. In terms of assembly, associates with subunits II, III and IV to form cytochrome c oxidase. It depends on Cu(2+) as a cofactor. The cofactor is heme.

It localises to the cell membrane. It catalyses the reaction 4 Fe(II)-[cytochrome c] + O2 + 8 H(+)(in) = 4 Fe(III)-[cytochrome c] + 2 H2O + 4 H(+)(out). Its pathway is energy metabolism; oxidative phosphorylation. Its function is as follows. Cytochrome c oxidase is the component of the respiratory chain that catalyzes the reduction of oxygen to water. Subunits 1-3 form the functional core of the enzyme complex. CO I is the catalytic subunit of the enzyme. Electrons originating in cytochrome c are transferred via the copper A center of subunit 2 and heme A of subunit 1 to the bimetallic center formed by heme A3 and copper B. This chain is Probable cytochrome c oxidase subunit 1-beta (ctaD2), found in Nocardia farcinica (strain IFM 10152).